Consider the following 125-residue polypeptide: Mediator of RNA polymerase II transcription subunit 11 (125 aa).

The protein belongs to the Mediator complex subunit 11 family. Component of the Mediator complex.

The protein resides in the nucleus. Its function is as follows. Component of the Mediator complex, a coactivator involved in the regulated transcription of nearly all RNA polymerase II-dependent genes. Mediator functions as a bridge to convey information from gene-specific regulatory proteins to the basal RNA polymerase II transcription machinery. Mediator is recruited to promoters by direct interactions with regulatory proteins and serves as a scaffold for the assembly of a functional pre-initiation complex with RNA polymerase II and the general transcription factors. This is Mediator of RNA polymerase II transcription subunit 11 (MED11) from Candida glabrata (strain ATCC 2001 / BCRC 20586 / JCM 3761 / NBRC 0622 / NRRL Y-65 / CBS 138) (Yeast).